A 420-amino-acid polypeptide reads, in one-letter code: UDP-N-acetylglucosamine 1-carboxyvinyltransferase (420 aa).

22 to 23 is a phosphoenolpyruvate binding site; it reads KN. Arg-93 contributes to the UDP-N-acetyl-alpha-D-glucosamine binding site. The Proton donor role is filled by Cys-117. 2-(S-cysteinyl)pyruvic acid O-phosphothioketal is present on Cys-117. The UDP-N-acetyl-alpha-D-glucosamine site is built by Asp-307 and Ile-329.

The protein belongs to the EPSP synthase family. MurA subfamily.

Its subcellular location is the cytoplasm. The catalysed reaction is phosphoenolpyruvate + UDP-N-acetyl-alpha-D-glucosamine = UDP-N-acetyl-3-O-(1-carboxyvinyl)-alpha-D-glucosamine + phosphate. It functions in the pathway cell wall biogenesis; peptidoglycan biosynthesis. Cell wall formation. Adds enolpyruvyl to UDP-N-acetylglucosamine. In Cellvibrio japonicus (strain Ueda107) (Pseudomonas fluorescens subsp. cellulosa), this protein is UDP-N-acetylglucosamine 1-carboxyvinyltransferase.